Reading from the N-terminus, the 147-residue chain is Large ribosomal subunit protein bL9 (147 aa).

Belongs to the bacterial ribosomal protein bL9 family.

Binds to the 23S rRNA. This is Large ribosomal subunit protein bL9 from Campylobacter hominis (strain ATCC BAA-381 / DSM 21671 / CCUG 45161 / LMG 19568 / NCTC 13146 / CH001A).